A 274-amino-acid polypeptide reads, in one-letter code: Penicillin-insensitive murein endopeptidase (274 aa).

An N-terminal signal peptide occupies residues Met-1–Ala-19. Disulfide bonds link Cys-44/Cys-265, Cys-187/Cys-235, and Cys-216/Cys-223. Zn(2+) is bound by residues His-110, His-113, Asp-120, Asp-147, His-150, and His-211. The tract at residues Glu-224–Pro-263 is disordered. Positions Pro-245–Pro-263 are enriched in pro residues.

The protein belongs to the peptidase M74 family. In terms of assembly, dimer. Zn(2+) is required as a cofactor.

It is found in the periplasm. In terms of biological role, murein endopeptidase that cleaves the D-alanyl-meso-2,6-diamino-pimelyl amide bond that connects peptidoglycan strands. Likely plays a role in the removal of murein from the sacculus. In Klebsiella pneumoniae subsp. pneumoniae (strain ATCC 700721 / MGH 78578), this protein is Penicillin-insensitive murein endopeptidase.